The chain runs to 429 residues: Mannose-6-phosphate isomerase (429 aa).

S2 carries the post-translational modification N-acetylserine. The residue at position 107 (S107) is a Phosphoserine. 4 residues coordinate Zn(2+): Q109, H111, E136, and H281. R300 is an active-site residue.

The protein belongs to the mannose-6-phosphate isomerase type 1 family. Monomer. Requires Zn(2+) as cofactor.

It is found in the cytoplasm. The catalysed reaction is D-mannose 6-phosphate = D-fructose 6-phosphate. The protein operates within nucleotide-sugar biosynthesis; GDP-alpha-D-mannose biosynthesis; alpha-D-mannose 1-phosphate from D-fructose 6-phosphate: step 1/2. Can be inhibited by an excess of zinc. Functionally, involved in the synthesis of the GDP-mannose and dolichol-phosphate-mannose required for a number of critical mannosyl transfer reactions. This is Mannose-6-phosphate isomerase (PMI40) from Saccharomyces cerevisiae (strain ATCC 204508 / S288c) (Baker's yeast).